We begin with the raw amino-acid sequence, 342 residues long: Alpha-(1,3)-fucosyltransferase 7 (342 aa).

Topologically, residues 1–14 (MNNAGHGPTRRLRG) are cytoplasmic. The chain crosses the membrane as a helical; Signal-anchor for type II membrane protein span at residues 15 to 36 (LGVLAGVALLAALWLLWLLGSA). The Lumenal segment spans residues 37–342 (PRGTPAPQPT…YEDLEGWFQA (306 aa)). An intrachain disulfide couples Cys-68 to Cys-76. N-linked (GlcNAc...) asparagine glycosylation occurs at Asn-81. An intrachain disulfide couples Cys-211 to Cys-214. Asn-291 carries an N-linked (GlcNAc...) asparagine glycan. The cysteines at positions 318 and 321 are disulfide-linked.

The protein belongs to the glycosyltransferase 10 family. Post-translationally, N-glycosylated. As to expression, leukocytic/myeloid lineage cells.

Its subcellular location is the golgi apparatus. It localises to the golgi stack membrane. It carries out the reaction an N-acetyl-alpha-neuraminyl-(2-&gt;3)-beta-D-galactosyl-(1-&gt;4)-N-acetyl-beta-D-glucosaminyl derivative + GDP-beta-L-fucose = an alpha-Neu5Ac-(2-&gt;3)-beta-D-Gal-(1-&gt;4)-[alpha-L-Fuc-(1-&gt;3)]-beta-D-GlcNAc derivative + GDP + H(+). The enzyme catalyses a neolactoside IV(3)-alpha-NeuAc-nLc4Cer + GDP-beta-L-fucose = a neolactoside IV(3)-alpha-NeuNAc,III(3)-alpha-Fuc-nLc4Cer + GDP + H(+). The catalysed reaction is a neolactoside VI(3)-alpha-NeuNAc-nLc6Cer + GDP-beta-L-fucose = a neolactoside VI(3)-alpha-NeuAc,V(3)-alphaFuc-nLc6Cer + GDP + H(+). It catalyses the reaction an alpha-Neu5Ac-(2-&gt;3)-beta-D-Gal-(1-&gt;4)-beta-D-GlcNAc-(1-&gt;3)-beta-D-Gal-(1-&gt;4)-[alpha-L-Fuc-(1-&gt;3)]-beta-D-GlcNAc derivative + GDP-beta-L-fucose = an alpha-Neu5Ac-(2-&gt;3)-beta-D-Gal-(1-&gt;4)-[alpha-L-Fuc-(1-&gt;3)]-beta-D-GlcNAc-(1-&gt;3)-beta-D-Gal-(1-&gt;4)-[alpha-L-Fuc-(1-&gt;3)]-beta-D-GlcNAc derivative + GDP + H(+). It carries out the reaction an alpha-Neu5Ac-(2-&gt;3)-beta-D-Gal-(1-&gt;4)-beta-D-GlcNAc6S derivative + GDP-beta-L-fucose = an alpha-Neu5Ac-(2-&gt;3)-beta-D-Gal-(1-&gt;4)-[alpha-L-Fuc-(1-&gt;3)]-beta-D-GlcNAc6S derivative + GDP + H(+). The enzyme catalyses alpha-Neu5Ac-(2-&gt;3)-beta-D-Gal-(1-&gt;4)-beta-D-GlcNAc-(1-&gt;3)-beta-D-Gal-(1-&gt;4)-D-Glc + GDP-beta-L-fucose = alpha-Neu5Ac-(2-&gt;3)-beta-D-Gal-(1-&gt;4)-[alpha-L-Fuc-(1-&gt;3)]-beta-D-GlcNAc-(1-&gt;3)-beta-D-Gal-(1-&gt;4)-D-Glc + GDP + H(+). The catalysed reaction is alpha-Neu5Ac-(2-&gt;3)-beta-D-Gal-(1-&gt;4)-beta-D-GlcNAc-(1-&gt;3)-beta-D-Gal-(1-&gt;4)-[alpha-L-Fuc-(1-&gt;3)]-beta-D-GlcNAc-(1-&gt;3)-beta-D-Gal-(1-&gt;4)-beta-D-GlcNAc + GDP-beta-L-fucose = alpha-Neu5Ac-(2-&gt;3)-beta-D-Gal-(1-&gt;4)-[alpha-L-Fuc-(1-&gt;3)]-beta-D-GlcNAc-(1-&gt;3)-beta-D-Gal-(1-&gt;4)-[alpha-L-Fuc-(1-&gt;3)]-beta-D-GlcNAc-(1-&gt;3)-beta-D-Gal-(1-&gt;4)-beta-D-GlcNAc + GDP + H(+). It catalyses the reaction alpha-Neu5Ac-(2-&gt;3)-beta-D-Gal-(1-&gt;4)-beta-D-GlcNAc-(1-&gt;3)-beta-D-Gal-(1-&gt;4)-beta-D-GlcNAc-(1-&gt;3)-beta-D-Gal-(1-&gt;4)-beta-D-GlcNAc + GDP-beta-L-fucose = alpha-Neu5Ac-(2-&gt;3)-beta-D-Gal-(1-&gt;4)-[alpha-L-Fuc-(1-&gt;3)]-beta-D-GlcNAc-(1-&gt;3)-beta-D-Gal-(1-&gt;4)-beta-D-GlcNAc-(1-&gt;3)-beta-D-Gal-(1-&gt;4)-beta-D-GlcNAc + GDP + H(+). It participates in protein modification; protein glycosylation. Inhibited by NaCl. Inhibited by GDP in a concentration dependent manner, with an IC(50) value of 93 uM. Also inhibited by GMP and GTP. Inhibited by N-ethylmaleimide. Activated by poly(ethylene glycol) by enhancing the thermal stability of FUT7. Activated by Mn2+, Ca2+, and Mg2+. Both panosialin A and B inhibit activity with IC(50) values of 4.8 and 5.3 ug/ml, respectively. Inhibited by gallic acid (GA) and (-)-epigallocatechin gallate (EGCG) in a time-dependent and irreversible manner with IC(50) values of 60 and 700 nM, respectively. Catalyzes the transfer of L-fucose, from a guanosine diphosphate-beta-L-fucose, to the N-acetyl glucosamine (GlcNAc) of a distal alpha2,3 sialylated lactosamine unit of a glycoprotein or a glycolipid-linked sialopolylactosamines chain through an alpha-1,3 glycosidic linkage and participates in the final fucosylation step in the biosynthesis of the sialyl Lewis X (sLe(x)), a carbohydrate involved in cell and matrix adhesion during leukocyte trafficking and fertilization. In vitro, also synthesizes sialyl-dimeric-Lex structures, from VIM-2 structures and both di-fucosylated and trifucosylated structures from mono-fucosylated precursors. However does not catalyze alpha 1-3 fucosylation when an internal alpha 1-3 fucosylation is present in polylactosamine chain and the fucosylation rate of the internal GlcNAc residues is reduced once fucose has been added to the distal GlcNAc. Also catalyzes the transfer of a fucose from GDP-beta-fucose to the 6-sulfated a(2,3)sialylated substrate to produce 6-sulfo sLex mediating significant L-selectin-dependent cell adhesion. Through sialyl-Lewis(x) biosynthesis, can control SELE- and SELP-mediated cell adhesion with leukocytes and allows leukocytes tethering and rolling along the endothelial tissue thereby enabling the leukocytes to accumulate at a site of inflammation. May enhance embryo implantation through sialyl Lewis X (sLeX)-mediated adhesion of embryo cells to endometrium. May affect insulin signaling by up-regulating the phosphorylation and expression of some signaling molecules involved in the insulin-signaling pathway through SLe(x) which is present on the glycans of the INSRR alpha subunit. The chain is Alpha-(1,3)-fucosyltransferase 7 from Homo sapiens (Human).